An 88-amino-acid polypeptide reads, in one-letter code: Otospiralin (88 aa).

The signal sequence occupies residues 1–21 (MQACMVPGLALCLLLGSLTEA).

This sequence belongs to the otospiralin family. In terms of tissue distribution, ear specific.

Its subcellular location is the secreted. May be essential for the survival of the neurosensory epithelium of the inner ear. The chain is Otospiralin (OTOS) from Cavia porcellus (Guinea pig).